A 167-amino-acid chain; its full sequence is Phosphopantetheine adenylyltransferase (167 aa).

Position 13 (threonine 13) interacts with substrate. Residues threonine 13–phenylalanine 14 and histidine 21 contribute to the ATP site. Residues lysine 45, leucine 78, and arginine 92 each coordinate substrate. ATP contacts are provided by residues glycine 93 to arginine 95, glutamate 103, and threonine 128 to serine 134.

The protein belongs to the bacterial CoaD family. Homohexamer. Mg(2+) is required as a cofactor.

The protein resides in the cytoplasm. The enzyme catalyses (R)-4'-phosphopantetheine + ATP + H(+) = 3'-dephospho-CoA + diphosphate. Its pathway is cofactor biosynthesis; coenzyme A biosynthesis; CoA from (R)-pantothenate: step 4/5. In terms of biological role, reversibly transfers an adenylyl group from ATP to 4'-phosphopantetheine, yielding dephospho-CoA (dPCoA) and pyrophosphate. This is Phosphopantetheine adenylyltransferase from Wolbachia sp. subsp. Brugia malayi (strain TRS).